A 527-amino-acid chain; its full sequence is Anthranilate synthase component 1 1 (527 aa).

Ser-52 serves as a coordination point for L-tryptophan. Residues 53 to 72 (AEKTPASDPDGAFTPDTTTE) are disordered. Residue 298 to 300 (PYM) coordinates L-tryptophan. Chorismate is bound at residue 333–334 (GT). Glu-360 contributes to the Mg(2+) binding site. Chorismate is bound by residues Tyr-448, Arg-468, 486 to 488 (GAG), and Gly-488. Glu-501 lines the Mg(2+) pocket.

This sequence belongs to the anthranilate synthase component I family. In terms of assembly, tetramer of two components I and two components II. The cofactor is Mg(2+).

It catalyses the reaction chorismate + L-glutamine = anthranilate + pyruvate + L-glutamate + H(+). Its pathway is amino-acid biosynthesis; L-tryptophan biosynthesis; L-tryptophan from chorismate: step 1/5. This is Anthranilate synthase component 1 1 (trpE1) from Halobacterium salinarum (strain ATCC 700922 / JCM 11081 / NRC-1) (Halobacterium halobium).